The sequence spans 147 residues: Hemoglobin subunit epsilon (147 aa).

The region spanning 3 to 147 is the Globin domain; the sequence is HFTPEEKCII…VAIALAHKYH (145 aa). Ser51 is subject to Phosphoserine. Heme b contacts are provided by His64 and His93.

The protein belongs to the globin family. Red blood cells.

Functionally, hemoglobin epsilon chain is a beta-type chain found in early embryos. The polypeptide is Hemoglobin subunit epsilon (HBE1) (Oryctolagus cuniculus (Rabbit)).